Consider the following 150-residue polypeptide: Avidin-related protein 6 (150 aa).

An N-terminal signal peptide occupies residues 1–24; it reads MVHATSPLLLLLLLSLALVAPGLS. The 122-residue stretch at 26–147 folds into the Avidin-like domain; it reads RKCSLTGEWD…GYNNFTRQRT (122 aa). A disulfide bridge connects residues C28 and C105. 2 residues coordinate biotin: N36 and S40. N-linked (GlcNAc...) asparagine glycosylation occurs at N54. Y57, T59, and D63 together coordinate biotin. N93 carries N-linked (GlcNAc...) asparagine glycosylation. Biotin contacts are provided by S95, S99, and N140. An N-linked (GlcNAc...) asparagine glycan is attached at N141.

Belongs to the avidin/streptavidin family. Homotetramer. Glycosylated.

It is found in the secreted. Its function is as follows. Forms a strong non-covalent specific complex with biotin. The protein is Avidin-related protein 6 (AVR6) of Gallus gallus (Chicken).